Reading from the N-terminus, the 244-residue chain is tRNA (guanine-N(7)-)-methyltransferase (244 aa).

Residues Glu42, Asp67, Asp94, and Asp116 each coordinate S-adenosyl-L-methionine. The active site involves Asp116. Substrate is bound by residues Lys120, Asp150, and 191–194 (TYYE).

This sequence belongs to the class I-like SAM-binding methyltransferase superfamily. TrmB family.

It carries out the reaction guanosine(46) in tRNA + S-adenosyl-L-methionine = N(7)-methylguanosine(46) in tRNA + S-adenosyl-L-homocysteine. Its pathway is tRNA modification; N(7)-methylguanine-tRNA biosynthesis. In terms of biological role, catalyzes the formation of N(7)-methylguanine at position 46 (m7G46) in tRNA. This is tRNA (guanine-N(7)-)-methyltransferase from Porphyromonas gingivalis (strain ATCC BAA-308 / W83).